A 526-amino-acid polypeptide reads, in one-letter code: ATP-dependent RNA helicase DBP3 (526 aa).

The span at 1 to 33 (MVEEHKNKKRRQEDGPADVPEKKVKVSKSEKKD) shows a compositional bias: basic and acidic residues. Positions 1–86 (MVEEHKNKKR…SSQGYTQSES (86 aa)) are disordered. Over residues 34–65 (KKEKKEKKEKKEKKEKKEKKEKKEKKEKKKKY) the composition is skewed to basic residues. A compositionally biased stretch (polar residues) spans 69-86 (ATISGSAQSSQGYTQSES). Residues 118 to 144 (LSFDQIQLNSKISAVVNKFPTPTPIQS) carry the Q motif motif. The Helicase ATP-binding domain maps to 147-318 (WPYLLSGKDV…STFMNQPVKV (172 aa)). 160-167 (AETGSGKT) lines the ATP pocket. The DEAD box motif lies at 265 to 268 (DEAD). The 163-residue stretch at 334-496 (QIVEVIEPFD…PVPDELLKFG (163 aa)) folds into the Helicase C-terminal domain.

This sequence belongs to the DEAD box helicase family. DDX5/DBP2 subfamily.

The protein localises to the nucleus. It is found in the nucleolus. It carries out the reaction ATP + H2O = ADP + phosphate + H(+). Its function is as follows. ATP-dependent RNA helicase required for 60S ribosomal subunit synthesis. Involved in efficient pre-rRNA processing, predominantly at site A3, which is necessary for the normal formation of 25S and 5.8S rRNAs. In Scheffersomyces stipitis (strain ATCC 58785 / CBS 6054 / NBRC 10063 / NRRL Y-11545) (Yeast), this protein is ATP-dependent RNA helicase DBP3 (DBP3).